Here is a 125-residue protein sequence, read N- to C-terminus: Period circadian protein (125 aa).

The segment at 1-125 is disordered; sequence EGSGGSGSSG…VTLTESLLNK (125 aa). A run of 3 repeats spans residues 30-31, 33-34, and 35-36. The segment covering 30–84 has biased composition (gly residues); that stretch reads GTGGTGTNTGTNTGTGTGTGTGTGTGTGTGTGTGTGTGTGTGTGTGTGKGAGAGT. The segment at 30 to 86 is 28 X 2 AA approximate tandem repeats of G-[TA]; the sequence is GTGGTGTNTGTNTGTGTGTGTGTGTGTGTGTGTGTGTGTGTGTGTGTGKGAGAGTGT. The stretch at 37–38 is one 4; approximate repeat; the sequence is NT. Repeat unit 5 spans residues 39 to 40; that stretch reads GT. The stretch at 41 to 42 is one 6; approximate repeat; that stretch reads NT. Repeat copies occupy residues 43–44, 45–46, 47–48, 49–50, 51–52, 53–54, 55–56, 57–58, 59–60, 61–62, 63–64, 65–66, 67–68, 69–70, 71–72, 73–74, and 75–76. A 24; approximate repeat occupies 77–78; the sequence is GK. A run of 4 repeats spans residues 79 to 80, 81 to 82, 83 to 84, and 85 to 86. Positions 85-112 are enriched in low complexity; the sequence is GTATNETAGPGTTTTTTTRSTTTAATAA. A compositionally biased stretch (polar residues) spans 116–125; sequence VTLTESLLNK.

As to quaternary structure, forms a heterodimer with timeless (TIM); the complex then translocates into the nucleus. Post-translationally, phosphorylated with a circadian rhythmicity, probably by the double-time protein (dbt). Phosphorylation could be implicated in the stability of per monomer and in the formation of heterodimer per-tim.

The protein localises to the nucleus. It localises to the cytoplasm. It is found in the perinuclear region. Functionally, essential for biological clock functions. Determines the period length of circadian and ultradian rhythms; an increase in PER dosage leads to shortened circadian rhythms and a decrease leads to lengthened circadian rhythms. Essential for the circadian rhythmicity of locomotor activity, eclosion behavior, and for the rhythmic component of the male courtship song that originates in the thoracic nervous system. The biological cycle depends on the rhythmic formation and nuclear localization of the TIM-PER complex. Light induces the degradation of TIM, which promotes elimination of PER. Nuclear activity of the heterodimer coordinatively regulates PER and TIM transcription through a negative feedback loop. Behaves as a negative element in circadian transcriptional loop. Does not appear to bind DNA, suggesting indirect transcriptional inhibition. This is Period circadian protein (per) from Drosophila ananassae (Fruit fly).